The chain runs to 884 residues: MGGCVSVQVSCDQLLNHLGRCFCRKLYYIQNIKENLTSLEEAMEDLKALRDDLLRKVQTAEEGGLQRLHQIKVWLKRVKTIESQFNDLDSSRTVELQRLCCCGVGSRNLRLSYDYGRRVFLMLNIVEDLKSKGIFEEVAHPATRAVGEERPLQPTIVGQETILEKAWDHLMDDGTKIMGLYGMGGVGKTTLLTQINNRFCDTDDGVEIVIWVVVSGDLQIHKIQKEIGEKIGFIGVEWNQKSENQKAVDILNFLSKKRFVLLLDDIWKRVELTEIGIPNPTSENGCKIAFTTRCQSVCASMGVHDPMEVRCLGADDAWDLFKKKVGDITLSSHPDIPEIARKVAQACCGLPLALNVIGETMACKKTTQEWDRAVDVSTTYAANFGAVKERILPILKYSYDNLESESVKTCFLYCSLFPEDDLIEKERLIDYWICEGFIDGDENKKGAVGEGYEILGTLVCASLLVEGGKFNNKSYVKMHDVVREMALWIASDLRKHKDNCIVRAGFRLNEIPKVKDWKVVSRMSLVNNRIKEIHGSPECPKLTTLFLQDNRHLVNISGEFFRSMPRLVVLDLSWNVNLSGLPDQISELVSLRYLDLSYSSIGRLPVGLLKLKKLMHLNLESMLCLESVSGIDHLSNLKTVRLLNLRMWLTISLLEELERLENLEVLTIEIISSSALEQLLCSHRLVRCLQKVSVKYLDEESVRILTLPSIGDLREVFIGGCGMRDIIIERNTSLTSPCFPNLSKVLITGCNGLKDLTWLLFAPNLTHLNVWNSRQIEEIISQEKASTADIVPFRKLEYLHLWDLPELKSIYWNPLPFPCLNQINVQNKCRKLTKLPLDSQSCIVAGEELVIQYGDEEWKERVEWEDKATRLRFLPSCKLVLCNR.

Residues 26 to 66 (LYYIQNIKENLTSLEEAMEDLKALRDDLLRKVQTAEEGGLQ) adopt a coiled-coil conformation. One can recognise an NB-ARC domain in the interval 139–443 (AHPATRAVGE…CEGFIDGDEN (305 aa)). 182-189 (GMGGVGKT) contacts ATP. LRR repeat units follow at residues 519 to 540 (VVSR…PECP), 541 to 563 (KLTT…FFRS), 566 to 588 (RLVV…ISEL), 590 to 612 (SLRY…LKLK), 613 to 635 (KLMH…DHLS), and 644 to 664 (NLRM…ENLE).

It belongs to the disease resistance NB-LRR family.

Probable disease resistance protein. This Arabidopsis thaliana (Mouse-ear cress) protein is Probable disease resistance protein At1g12290.